A 474-amino-acid chain; its full sequence is MTDTHPGVDFMIKPEATSASKIDTAEWPLLLKNFDKLLVRTGHYTPIPCGNNPLKRPIAEYVSSGVINLDKPANPSSHEVVAWVKKILRVEKTGHSGTLDPKVTGCLIICNDRATRLVKSQQSAGKEYVCVLRLHDSVEGERNVASAIETLTGALFQRPPLISAVKRQLRIRSIYESKLIEFDNERNLAVFWASCEAGTYMRTLCVHLGLLLGVGGHMQELRRVRSGCLSENDDIVTMHDVLDAQWIYDNTRDESYLRRVIRPLESLLVGYKRIVVKDSAVNAICYGAKLMIPGLLRYEAGIEVNEEIVLITTKGEAIAVGIAQMSTVELSTCDHGVVAKVKRCIMERDVYPRRWGLGPQSMKKKTLKKEGKLDKYGRPNENTPADWSKSYIDYSDPNAEVAKPAPVVAPAAPTVEAEVNGVEDSKKRKSVESSEKDEDEAAKKEEKRRKKEAKKEKKEKKEKKEKKEKKKKSE.

The Nucleophile role is filled by D100. Residues 271–346 enclose the PUA domain; the sequence is YKRIVVKDSA…VVAKVKRCIM (76 aa). Disordered regions lie at residues 361 to 391 and 406 to 474; these read SMKK…SKSY and PVVA…KKSE. Basic and acidic residues predominate over residues 368-378; that stretch reads KKEGKLDKYGR. The segment covering 406–419 has biased composition (low complexity); the sequence is PVVAPAAPTVEAEV. Residues 423–434 show a composition bias toward basic and acidic residues; it reads EDSKKRKSVESS. The 7 X 3 AA approximate tandem repeats of K-K-E stretch occupies residues 434 to 468; the sequence is SEKDEDEAAKKEEKRRKKEAKKEKKEKKEKKEKKE. 7 tandem repeats follow at residues 443–445, 450–452, 454–456, 457–459, 460–462, 463–465, and 466–468. Positions 446–474 are enriched in basic residues; the sequence is EKRRKKEAKKEKKEKKEKKEKKEKKKKSE.

The protein belongs to the pseudouridine synthase TruB family. In terms of assembly, component of the small nucleolar ribonucleoprotein particles containing H/ACA-type snoRNAs (H/ACA snoRNPs).

It is found in the nucleus. Its subcellular location is the nucleolus. It catalyses the reaction uridine in 5S rRNA = pseudouridine in 5S rRNA. The catalysed reaction is uridine in snRNA = pseudouridine in snRNA. The enzyme catalyses a uridine in mRNA = a pseudouridine in mRNA. Its function is as follows. Catalytic subunit of H/ACA small nucleolar ribonucleoprotein (H/ACA snoRNP) complex, which catalyzes pseudouridylation of rRNA. This involves the isomerization of uridine such that the ribose is subsequently attached to C5, instead of the normal N1. Pseudouridine ('psi') residues may serve to stabilize the conformation of rRNAs and play a central role in ribosomal RNA processing. The H/ACA snoRNP complex also mediates pseudouridylation of other types of RNAs. Catalyzes pseudouridylation at position 93 in U2 snRNA. Also catalyzes pseudouridylation of mRNAs; H/ACA-type snoRNAs probably guide pseudouridylation of mRNAs. This chain is H/ACA ribonucleoprotein complex subunit cbf5 (cbf5), found in Schizosaccharomyces pombe (strain 972 / ATCC 24843) (Fission yeast).